A 372-amino-acid polypeptide reads, in one-letter code: N-methyl-L-tryptophan oxidase (372 aa).

Residue 4-34 participates in FAD binding; that stretch reads DLIIIGSGSVGAAAGYYATRAGLKVLMTDAH. Residue Cys-307 is modified to S-8alpha-FAD cysteine.

It belongs to the MSOX/MTOX family. MTOX subfamily. In terms of assembly, monomer. FAD is required as a cofactor.

The catalysed reaction is N(alpha)-methyl-L-tryptophan + O2 + H2O = L-tryptophan + formaldehyde + H2O2. Catalyzes the oxidative demethylation of N-methyl-L-tryptophan. This is N-methyl-L-tryptophan oxidase from Salmonella typhimurium (strain LT2 / SGSC1412 / ATCC 700720).